Consider the following 170-residue polypeptide: Ribosome maturation factor RimM (170 aa).

The region spanning 97–170 (HPDEYYWVDL…RIVVDWDPEF (74 aa)) is the PRC barrel domain.

The protein belongs to the RimM family. Binds ribosomal protein uS19.

The protein localises to the cytoplasm. Functionally, an accessory protein needed during the final step in the assembly of 30S ribosomal subunit, possibly for assembly of the head region. Essential for efficient processing of 16S rRNA. May be needed both before and after RbfA during the maturation of 16S rRNA. It has affinity for free ribosomal 30S subunits but not for 70S ribosomes. The sequence is that of Ribosome maturation factor RimM from Xylella fastidiosa (strain M12).